A 206-amino-acid polypeptide reads, in one-letter code: tRNA(Phe) 7-((3-amino-3-carboxypropyl)-4-demethylwyosine(37)-N(4))-methyltransferase 2 (206 aa).

Belongs to the TYW3 family.

It catalyses the reaction 4-demethyl-7-[(3S)-3-amino-3-carboxypropyl]wyosine(37) in tRNA(Phe) + S-adenosyl-L-methionine = 7-[(3S)-3-amino-3-carboxypropyl]wyosine(37) in tRNA(Phe) + S-adenosyl-L-homocysteine + H(+). Its function is as follows. S-adenosyl-L-methionine-dependent methyltransferase that acts as a component of the wyosine derivatives biosynthesis pathway. Probably methylates N-4 position of wybutosine-86 to produce wybutosine-72. This is tRNA(Phe) 7-((3-amino-3-carboxypropyl)-4-demethylwyosine(37)-N(4))-methyltransferase 2 from Pyrococcus horikoshii (strain ATCC 700860 / DSM 12428 / JCM 9974 / NBRC 100139 / OT-3).